Reading from the N-terminus, the 644-residue chain is Exoribonuclease 2 (644 aa).

The RNB domain maps to 190 to 516 (REDLTALDFI…INHRLLKALI (327 aa)). In terms of domain architecture, S1 motif spans 562 to 644 (DSRFAAEIID…ENRSVIARPV (83 aa)).

This sequence belongs to the RNR ribonuclease family. RNase II subfamily.

The protein localises to the cytoplasm. It catalyses the reaction Exonucleolytic cleavage in the 3'- to 5'-direction to yield nucleoside 5'-phosphates.. Involved in mRNA degradation. Hydrolyzes single-stranded polyribonucleotides processively in the 3' to 5' direction. This chain is Exoribonuclease 2, found in Sodalis glossinidius (strain morsitans).